Reading from the N-terminus, the 308-residue chain is D-alanine--D-alanine ligase (308 aa).

The ATP-grasp domain occupies 108-303; that stretch reads KLVWKAAGLP…YEALCLKVLE (196 aa). Residue 134-189 coordinates ATP; sequence EAELGLPMFVKPACEGSSLGVTKVRKAGELAQAYAEARKFDPLVLAEQFVGGGEYT. Mg(2+)-binding residues include Asp257, Glu270, and Asn272.

Belongs to the D-alanine--D-alanine ligase family. Mg(2+) is required as a cofactor. Requires Mn(2+) as cofactor.

The protein localises to the cytoplasm. The enzyme catalyses 2 D-alanine + ATP = D-alanyl-D-alanine + ADP + phosphate + H(+). It functions in the pathway cell wall biogenesis; peptidoglycan biosynthesis. In terms of biological role, cell wall formation. The chain is D-alanine--D-alanine ligase from Laribacter hongkongensis (strain HLHK9).